The chain runs to 370 residues: tRNA-specific 2-thiouridylase MnmA (370 aa).

Residues 24–31 (AMSGGVDS) and leucine 50 contribute to the ATP site. Cysteine 119 functions as the Nucleophile in the catalytic mechanism. An intrachain disulfide couples cysteine 119 to cysteine 215. Glycine 143 contributes to the ATP binding site. Residues 165–167 (KDQ) form an interaction with tRNA region. The active-site Cysteine persulfide intermediate is the cysteine 215.

This sequence belongs to the MnmA/TRMU family.

The protein localises to the cytoplasm. It carries out the reaction S-sulfanyl-L-cysteinyl-[protein] + uridine(34) in tRNA + AH2 + ATP = 2-thiouridine(34) in tRNA + L-cysteinyl-[protein] + A + AMP + diphosphate + H(+). In terms of biological role, catalyzes the 2-thiolation of uridine at the wobble position (U34) of tRNA, leading to the formation of s(2)U34. This chain is tRNA-specific 2-thiouridylase MnmA, found in Wolbachia pipientis wMel.